A 140-amino-acid chain; its full sequence is Protein YwqH (140 aa).

The stretch at 6 to 51 (MLADIKSSLNGKISDVEDKIEKLKKAKKDIDTLQEEAITEIKEIVK) forms a coiled coil.

The chain is Protein YwqH (ywqH) from Bacillus subtilis (strain 168).